A 21-amino-acid polypeptide reads, in one-letter code: Dahlein-5.2 (21 aa).

In terms of tissue distribution, expressed by the skin dorsal glands.

It is found in the secreted. Functionally, has no antimicrobial activity. Strongly inhibits the formation of NO by neuronal nitric oxide synthase at micromolar concentrations. The polypeptide is Dahlein-5.2 (Ranoidea dahlii (Dahl's aquatic frog)).